The chain runs to 438 residues: Serine hydroxymethyltransferase (438 aa).

(6S)-5,6,7,8-tetrahydrofolate-binding positions include Leu-119 and 123 to 125 (GHL). At Lys-228 the chain carries N6-(pyridoxal phosphate)lysine. Residue 370–372 (SPF) participates in (6S)-5,6,7,8-tetrahydrofolate binding.

The protein belongs to the SHMT family. Homodimer. Pyridoxal 5'-phosphate is required as a cofactor.

Its subcellular location is the cytoplasm. It carries out the reaction (6R)-5,10-methylene-5,6,7,8-tetrahydrofolate + glycine + H2O = (6S)-5,6,7,8-tetrahydrofolate + L-serine. It functions in the pathway one-carbon metabolism; tetrahydrofolate interconversion. The protein operates within amino-acid biosynthesis; glycine biosynthesis; glycine from L-serine: step 1/1. Functionally, catalyzes the reversible interconversion of serine and glycine with tetrahydrofolate (THF) serving as the one-carbon carrier. This reaction serves as the major source of one-carbon groups required for the biosynthesis of purines, thymidylate, methionine, and other important biomolecules. Also exhibits THF-independent aldolase activity toward beta-hydroxyamino acids, producing glycine and aldehydes, via a retro-aldol mechanism. This Chlorobium chlorochromatii (strain CaD3) protein is Serine hydroxymethyltransferase.